A 115-amino-acid chain; its full sequence is Viral Lymphotactin (115 aa).

A signal peptide spans methionine 1–serine 19. A disulfide bridge links cysteine 30 with cysteine 67.

It belongs to the intercrine gamma family. In terms of assembly, interacts with host XCR1. N-glycosylated and O-glycosylated.

The protein resides in the secreted. In terms of biological role, chemoattractant for CD4-dendritic cells, but not for CD4+ dendritic cells, T-cells or B-cells. The chain is Viral Lymphotactin (vXCL1) from Rat cytomegalovirus (isolate England) (RCMV-E).